A 612-amino-acid chain; its full sequence is BTB/POZ domain-containing protein 9 (612 aa).

A BTB domain is found at 36-104 (GDVTFVVEKK…IYTGRATLTD (69 aa)). The BACK domain occupies 142–240 (VCMTFDVASL…SLTELLNVVR (99 aa)). Residues 560–612 (QSSQKEENSEESGTGDTSLAGQQLDSHALRAPSGSSLPSSPGSNSRSPNRQHQ) form a disordered region. Polar residues predominate over residues 573–584 (TGDTSLAGQQLD). The span at 588–612 (LRAPSGSSLPSSPGSNSRSPNRQHQ) shows a compositional bias: low complexity.

As to expression, detected in the brain (at protein level). Moderately expressed in all specific brain regions examined. Expressed in the dopaminergic neurons of the substantia nigra and A11 neurons. Highly expressed in kidney and moderately expressed in all other adult and fetal tissues.

This chain is BTB/POZ domain-containing protein 9 (BTBD9), found in Homo sapiens (Human).